Here is an 840-residue protein sequence, read N- to C-terminus: Urease (840 aa).

The Urease domain maps to glycine 402–phenylalanine 840. Histidine 407, histidine 409, and lysine 490 together coordinate Ni(2+). Lysine 490 carries the N6-carboxylysine modification. Histidine 492 provides a ligand contact to substrate. Positions 519 and 545 each coordinate Ni(2+). Histidine 593 acts as the Proton donor in catalysis. A Ni(2+)-binding site is contributed by aspartate 633.

It in the C-terminal section; belongs to the metallo-dependent hydrolases superfamily. Urease alpha subunit family. In terms of assembly, homohexamer. Other oligomeric forms may exist depending on pH and presence of salts. It depends on Ni cation as a cofactor. Post-translationally, carboxylation allows a single lysine to coordinate two nickel ions.

The catalysed reaction is urea + 2 H2O + H(+) = hydrogencarbonate + 2 NH4(+). The protein operates within nitrogen metabolism; urea degradation; CO(2) and NH(3) from urea (urease route): step 1/1. With respect to regulation, P-hydroxymercuribenzoate irreversibly abolishes ureolytic activity, but does not inhibit the ability to activate platelets. Also inhibited by acetohydroxamic acid (AHA), a chelator of Ni2+ and Zn2+ ions. Its function is as follows. Urea hydrolase involved in nitrogen recycling from ureide, purine, and arginine catabolism. Is known to be highly toxic and lethal when given by intravenous route, producing convulsions and other signs of central nervous system intoxication associated with the high levels of ammonia formed in the blood of mice and rabbits. Is neurotoxic in mammals, when directly injected into hippocampus. It may induce seizures by acting at a neuronal network level, thereby disturbing electroencephalographic rhythms and causing metabolic alterations in key areas related to epileptogenesis and to neurogenic pulmonary edema. It increases calcium influx and neuronal firing rate in the hippocampus. Is able to insert itself into lipid bilayers, altering physicochemical properties of artificial membranes, and forming cation-selective ion channels. In vitro, has the ability to induce platelet aggregation, platelet granules secretion and release of ATP. In contrast to canatoxin, another urease from C.ensiformis, is not lethal to mice when intraperitoneally injected. In Canavalia ensiformis (Jack bean), this protein is Urease.